The chain runs to 197 residues: Transposon Tn552 resolvase (197 aa).

Residues 1-136 (MKIGYARVST…AGRIAARARG (136 aa)) form the Resolvase/invertase-type recombinase catalytic domain. Serine 9 serves as the catalytic O-(5'-phospho-DNA)-serine intermediate. The segment at residues 163–182 (IKTIAEQWQVSRTTIYRYLN) is a DNA-binding region (H-T-H motif).

It belongs to the site-specific recombinase resolvase family.

Resolvase catalyzes the resolution (a site-specific recombination) of the cointegrated replicon to yield the final transposition products. The protein is Transposon Tn552 resolvase (tnpR) of Staphylococcus aureus.